The sequence spans 472 residues: Siroheme synthase 1 (472 aa).

Positions 1 to 203 are precorrin-2 dehydrogenase /sirohydrochlorin ferrochelatase; it reads MDYLPLFADL…GQLTEAENEL (203 aa). NAD(+) is bound by residues 22–23 and 43–44; these read EV and QT. Phosphoserine is present on Ser128. Positions 215–472 are uroporphyrinogen-III C-methyltransferase; sequence GEVALVGAGP…AISPSVVNLA (258 aa). Pro224 contributes to the S-adenosyl-L-methionine binding site. Asp247 functions as the Proton acceptor in the catalytic mechanism. Lys269 serves as the catalytic Proton donor. Residues 300–302, Ile305, 330–331, Met382, and Gly411 each bind S-adenosyl-L-methionine; these read GGD and TA.

It in the N-terminal section; belongs to the precorrin-2 dehydrogenase / sirohydrochlorin ferrochelatase family. The protein in the C-terminal section; belongs to the precorrin methyltransferase family.

The enzyme catalyses uroporphyrinogen III + 2 S-adenosyl-L-methionine = precorrin-2 + 2 S-adenosyl-L-homocysteine + H(+). It catalyses the reaction precorrin-2 + NAD(+) = sirohydrochlorin + NADH + 2 H(+). The catalysed reaction is siroheme + 2 H(+) = sirohydrochlorin + Fe(2+). It functions in the pathway cofactor biosynthesis; adenosylcobalamin biosynthesis; precorrin-2 from uroporphyrinogen III: step 1/1. The protein operates within cofactor biosynthesis; adenosylcobalamin biosynthesis; sirohydrochlorin from precorrin-2: step 1/1. It participates in porphyrin-containing compound metabolism; siroheme biosynthesis; precorrin-2 from uroporphyrinogen III: step 1/1. Its pathway is porphyrin-containing compound metabolism; siroheme biosynthesis; siroheme from sirohydrochlorin: step 1/1. It functions in the pathway porphyrin-containing compound metabolism; siroheme biosynthesis; sirohydrochlorin from precorrin-2: step 1/1. Functionally, multifunctional enzyme that catalyzes the SAM-dependent methylations of uroporphyrinogen III at position C-2 and C-7 to form precorrin-2 via precorrin-1. Then it catalyzes the NAD-dependent ring dehydrogenation of precorrin-2 to yield sirohydrochlorin. Finally, it catalyzes the ferrochelation of sirohydrochlorin to yield siroheme. This is Siroheme synthase 1 from Yersinia pestis bv. Antiqua (strain Nepal516).